An 83-amino-acid chain; its full sequence is MAIKERIGVVVSDKMDKTVVVAVSNRVPHKKYGKIVGQTRRYKAHDEENACHVGDRVRIRESRPLSRTKRWAVTDVLVAANRP.

It belongs to the universal ribosomal protein uS17 family. In terms of assembly, part of the 30S ribosomal subunit.

In terms of biological role, one of the primary rRNA binding proteins, it binds specifically to the 5'-end of 16S ribosomal RNA. The sequence is that of Small ribosomal subunit protein uS17 from Acaryochloris marina (strain MBIC 11017).